The primary structure comprises 1392 residues: MNNPKWTPAQQAAIDLKGQLLVAAAAGSGKTAVLVQRLFKQITDVDEQVDVDRFLVVTFTKAAAAEMRERIGKALDEALFGAAEPAQVEHLLQQRALLYRASITTLHSFCMELIRQYFYLIELDPAFRVADEAEADLLRQDTLEDLFEAYYGEETPAFQSLVDAFGTDRDDQPLMASILRLHEFAMSQVHPGEWLEHLPAAYDWHSLDDLMESPWGQVVRQGVRDKVEEGLILLERAYRLAELPGGPVHYLPVLEDDQSRLGFLREMAEKGTWSDIETAFKSAAAFPGLPRGSKKNLPDSLIDEENSKRLREESKKARDEAKKKLEEIKNTVFSVPLTDQLPFLNKMGELVGTLAQVTQHFAREYQKAKRQRNCVDFSDLEHYALQLLAKDKQPTEIALKLQAYYAEVLVDEYQDINPVQERILQLVSRQEEGKANLFMVGDVKQSIYRFRMADPGLFLRKYGEFPHYQEGGGAAPNLVIDLNQNFRSRPEVIQGINYLFYQIMTEGAGEIVYDEQAALRPGAKFVSDGELRTAEGPIEVHLFDPKAIDLSLGQKRGAEDAATEVDSPAKGEGEEFEQNREPESGDDESSLEEAETARIEARLVAARIQKMVLEREFQIHDKELGDYRPVQYADIVILMRSLASVASVYAEEFQKAGIPVYAETNSGYFGTNEVDTVLSLLKIIDNPRLDIPFAAVLRSPLVGMNGTELGKLRSLLPQGDFYETLVLTFWAGDAHRQEEGHEFYSEIREILGKHWESLPQLEVKVRHILETSPEIKEKVDAFFPKLQEWRHRSRRTSLADLLWHLYEDTGYLAYVGTLPAGAQRQANLRVLYDRACRYEATNYRGLFRFLRFLEKFQSQGKDLGNASIVGEKENVVRFITVHSSKGLEFPVVFIAGLGKKFNTRSLSSQLLLHSHLGVGIPLIDIENQVRYPSVIQYAVKERLWQEALAEELRILYVALTRGKERLFLFGHQHKLAEAINKWRSLALSCPDTAFPDGQLRGAKTYLDWLGPALVRHPEDLFKLGSFPTASELPDSSSQWKVILHDQIAGKGPVQEATSSQDEIILPDQETLGEREASEETEIPGETEASGKTEIPGETKNSEETKTSEDKKNLEAQTPETADLDTKNLQEEVFRQLNWQYPYPEGVNQSAKTSVSELKRQSLWYMDNEYSSPSSSSSSSPSALSAPSFLRPQFIVSRKELTPAERGTAVHAAIQHLPLALWRDTWEELAQEVRESMLQEHIDSLIRREILSAEQGGAVSVSQLKNLLDSTSGKRLWEAEEVRREVPFTLSLRLRAQKEPVLVQGIIDAVLLSHQEHEAQVMDFKTDNLAGVPDPELVLTQRYGLQLGLYALAVERLLKVPVRECIIYATSLNREFVMQREAVQAALESVVIV.

One can recognise a UvrD-like helicase ATP-binding domain in the interval 3–489 (NPKWTPAQQA…IDLNQNFRSR (487 aa)). ATP is bound at residue 24 to 31 (AAAGSGKT). Disordered stretches follow at residues 291-319 (RGSK…KARD), 555-594 (KRGA…LEEA), and 1051-1126 (GPVQ…LDTK). Composition is skewed to basic and acidic residues over residues 305–319 (ENSK…KARD) and 567–583 (SPAK…REPE). Positions 556–886 (RGAEDAATEV…RFITVHSSKG (331 aa)) constitute a UvrD-like helicase C-terminal domain. Over residues 584–594 (SGDDESSLEEA) the composition is skewed to acidic residues. The span at 1088–1113 (ASGKTEIPGETKNSEETKTSEDKKNL) shows a compositional bias: basic and acidic residues.

Belongs to the helicase family. AddA subfamily. As to quaternary structure, heterodimer of AddA and AddB/RexB. The cofactor is Mg(2+).

It carries out the reaction Couples ATP hydrolysis with the unwinding of duplex DNA by translocating in the 3'-5' direction.. The enzyme catalyses ATP + H2O = ADP + phosphate + H(+). Its function is as follows. The heterodimer acts as both an ATP-dependent DNA helicase and an ATP-dependent, dual-direction single-stranded exonuclease. Recognizes the chi site generating a DNA molecule suitable for the initiation of homologous recombination. The AddA nuclease domain is required for chi fragment generation; this subunit has the helicase and 3' -&gt; 5' nuclease activities. The protein is ATP-dependent helicase/nuclease subunit A of Desulfitobacterium hafniense (strain DSM 10664 / DCB-2).